Consider the following 401-residue polypeptide: Pyruvyl transferase 1 (401 aa).

Positions 1 to 30 (MFANINIRKSVWLFLLAAVSCTLFIYGVTR) are cleaved as a signal peptide. The segment at 38–64 (NPSSLTSPSSSTSVDKKKPLFTKSPRN) is disordered. The segment covering 39-50 (PSSLTSPSSSTS) has biased composition (low complexity).

This sequence belongs to the polysaccharide pyruvyl transferase family.

Its function is as follows. Involved in cell wall biogenesis. Has a role in the addition of Gal-beta1,3 moieties to galactomannans and their subsequent pyruvylation. The sequence is that of Pyruvyl transferase 1 (pvg1) from Schizosaccharomyces pombe (strain 972 / ATCC 24843) (Fission yeast).